The primary structure comprises 252 residues: Cyclic di-GMP binding protein VCA0042 (252 aa).

Over residues 1 to 11 the composition is skewed to basic and acidic residues; sequence MNSRPAEKIDN. The segment at 1–24 is disordered; sequence MNSRPAEKIDNNDGQTETPRSKTV. Over residues 12–24 the composition is skewed to polar residues; the sequence is NDGQTETPRSKTV. Residues 134–233 form the PilZ domain; it reads QLRKEPRFEL…EEGRNNAKNL (100 aa).

This sequence belongs to the YcgR family. In terms of assembly, dimer.

Its subcellular location is the bacterial flagellum basal body. Its function is as follows. May act as a flagellar brake, regulating swimming and swarming in a bis-(3'-5') cyclic diguanylic acid (c-di-GMP)-dependent manner. Increasing levels of c-di-GMP lead to decreased motility (Potential). Binds bis-(3'-5') cyclic diguanylic acid (c-di-GMP) with a dissociation constant of 170 nM in the presence of 10 mM KCl and with 100 nM in its absence. Binds 1 to 2 c-di-GMP per subunit. Only 1 c-di-GMP is seen in the wild-type crystal, while 2 are seen in the mutant. Depending on the concentration of K(+) stoichiometries of 1:1, 1.43:1 and 2:1 are determined by isothermal titration calorimetry. The polypeptide is Cyclic di-GMP binding protein VCA0042 (Vibrio cholerae serotype O1 (strain ATCC 39315 / El Tor Inaba N16961)).